We begin with the raw amino-acid sequence, 242 residues long: 7-cyano-7-deazaguanine synthase (242 aa).

12 to 22 (FSGGQDSTTCL) contacts ATP. Zn(2+)-binding residues include Cys-200, Cys-215, Cys-218, and Cys-221.

The protein belongs to the QueC family. Requires Zn(2+) as cofactor.

The catalysed reaction is 7-carboxy-7-deazaguanine + NH4(+) + ATP = 7-cyano-7-deazaguanine + ADP + phosphate + H2O + H(+). It participates in purine metabolism; 7-cyano-7-deazaguanine biosynthesis. In terms of biological role, catalyzes the ATP-dependent conversion of 7-carboxy-7-deazaguanine (CDG) to 7-cyano-7-deazaguanine (preQ(0)). The chain is 7-cyano-7-deazaguanine synthase from Nitratidesulfovibrio vulgaris (strain ATCC 29579 / DSM 644 / CCUG 34227 / NCIMB 8303 / VKM B-1760 / Hildenborough) (Desulfovibrio vulgaris).